The sequence spans 515 residues: Glucose-6-phosphate 1-dehydrogenase (515 aa).

Alanine 2 bears the N-acetylalanine mark. Serine 8 carries the post-translational modification Phosphoserine. Phosphothreonine is present on threonine 10. NADP(+) contacts are provided by residues 38–45 (GASGDLAK) and arginine 72. Lysine 89 bears the N6-acetyllysine mark. NADP(+)-binding residues include tyrosine 147 and lysine 171. Residues lysine 171, 201–205 (HYLGK), glutamate 239, and aspartate 258 contribute to the D-glucose 6-phosphate site. N6-(2-hydroxyisobutyryl)lysine; alternate is present on lysine 171. The residue at position 171 (lysine 171) is an N6-acetyllysine; alternate. Residue histidine 263 is the Proton acceptor of the active site. Arginine 357 lines the NADP(+) pocket. The D-glucose 6-phosphate site is built by lysine 360 and arginine 365. 3 residues coordinate NADP(+): lysine 366, arginine 370, and arginine 393. A D-glucose 6-phosphate-binding site is contributed by glutamine 395. NADP(+)-binding positions include 401–403 (YTK) and 421–423 (DLT). Lysine 403 carries the N6-acetyllysine modification. An N6-acetyllysine modification is found at lysine 432. Arginine 487 contributes to the NADP(+) binding site. Lysine 497 carries the post-translational modification N6-acetyllysine. Residues tyrosine 503 and tryptophan 509 each coordinate NADP(+). A Phosphotyrosine modification is found at tyrosine 503.

The protein belongs to the glucose-6-phosphate dehydrogenase family. Homotetramer; dimer of dimers. Interacts with SIRT2; the interaction is enhanced by H(2)O(2) treatment. Forms a ternary complex with ALDOB and TP53; this interaction is direct. ALDOB stabilizes the complex inhibiting G6PD activity and keeping oxidative pentose phosphate metabolism in check. In terms of processing, acetylated by ELP3 at Lys-403; acetylation inhibits its homodimerization and enzyme activity. Deacetylated by SIRT2 at Lys-403; deacetylation stimulates its enzyme activity.

It localises to the cytoplasm. The protein localises to the cytosol. It is found in the membrane. It catalyses the reaction D-glucose 6-phosphate + NADP(+) = 6-phospho-D-glucono-1,5-lactone + NADPH + H(+). It participates in carbohydrate degradation; pentose phosphate pathway; D-ribulose 5-phosphate from D-glucose 6-phosphate (oxidative stage): step 1/3. In terms of biological role, cytosolic glucose-6-phosphate dehydrogenase that catalyzes the first and rate-limiting step of the oxidative branch within the pentose phosphate pathway/shunt, an alternative route to glycolysis for the dissimilation of carbohydrates and a major source of reducing power and metabolic intermediates for fatty acid and nucleic acid biosynthetic processes. The chain is Glucose-6-phosphate 1-dehydrogenase (G6pdx) from Rattus norvegicus (Rat).